The chain runs to 231 residues: Biosynthetic peptidoglycan transglycosylase (231 aa).

A helical membrane pass occupies residues 10–30 (LLLLGLIGLFLVWQLWLLGWV).

The protein belongs to the glycosyltransferase 51 family.

Its subcellular location is the cell inner membrane. The catalysed reaction is [GlcNAc-(1-&gt;4)-Mur2Ac(oyl-L-Ala-gamma-D-Glu-L-Lys-D-Ala-D-Ala)](n)-di-trans,octa-cis-undecaprenyl diphosphate + beta-D-GlcNAc-(1-&gt;4)-Mur2Ac(oyl-L-Ala-gamma-D-Glu-L-Lys-D-Ala-D-Ala)-di-trans,octa-cis-undecaprenyl diphosphate = [GlcNAc-(1-&gt;4)-Mur2Ac(oyl-L-Ala-gamma-D-Glu-L-Lys-D-Ala-D-Ala)](n+1)-di-trans,octa-cis-undecaprenyl diphosphate + di-trans,octa-cis-undecaprenyl diphosphate + H(+). It functions in the pathway cell wall biogenesis; peptidoglycan biosynthesis. Its function is as follows. Peptidoglycan polymerase that catalyzes glycan chain elongation from lipid-linked precursors. The sequence is that of Biosynthetic peptidoglycan transglycosylase from Dechloromonas aromatica (strain RCB).